We begin with the raw amino-acid sequence, 347 residues long: Putative GDP-L-fucose synthase 2 (347 aa).

Positions 1–20 (MPSQQRSSSGSTAKAGDADG) are disordered. 41 to 47 (GHRGMVG) is an NADP(+) binding site. The active-site Proton donor/acceptor is Tyr-168. Residues Lys-172, 195-198 (PNNL), and His-211 contribute to the NADP(+) site. Residues Arg-219, Trp-234, Arg-241, and Glu-301 each coordinate substrate.

This sequence belongs to the NAD(P)-dependent epimerase/dehydratase family. Fucose synthase subfamily. Homodimer.

It carries out the reaction GDP-beta-L-fucose + NADP(+) = GDP-4-dehydro-alpha-D-rhamnose + NADPH + H(+). The protein operates within nucleotide-sugar biosynthesis; GDP-L-fucose biosynthesis via de novo pathway; GDP-L-fucose from GDP-alpha-D-mannose: step 2/2. Functionally, catalyzes the two-step NADP-dependent conversion of GDP-4-dehydro-6-deoxy-D-mannose to GDP-fucose, involving an epimerase and a reductase reaction. The polypeptide is Putative GDP-L-fucose synthase 2 (Oryza sativa subsp. japonica (Rice)).